Consider the following 856-residue polypeptide: V-type proton ATPase 116 kDa subunit a 2 (856 aa).

The Cytoplasmic portion of the chain corresponds to 1 to 393; that stretch reads MGSLFRSETM…DAYGVGSYRE (393 aa). The chain crosses the membrane as a helical span at residues 394–412; it reads VNPALFTIITFPFLFAVMF. Residues 413-414 are Vacuolar-facing; the sequence is GD. Residues 415 to 431 form a helical membrane-spanning segment; it reads FGHGFVMFLFALLLVLN. Over 432 to 445 the chain is Cytoplasmic; that stretch reads ENHPRLNQSQEIMR. A helical transmembrane segment spans residues 446 to 475; sequence MFFNGRYILLLMGLFSVYTGLIYNDCFSKS. Topologically, residues 476-549 are vacuolar; it reads VNLFGSGWNV…ATNRLTFLNS (74 aa). N-linked (GlcNAc...) asparagine glycosylation is found at Asn-484 and Asn-505. A helical membrane pass occupies residues 550 to 569; the sequence is FKMKMSVILGIIHMTFGVIL. Residues 570-587 lie on the Cytoplasmic side of the membrane; it reads GIFNHLHFRKKFNIYLVS. Residues 588 to 608 form a helical membrane-spanning segment; that stretch reads IPELLFMLCIFGYLIFMIFYK. Residues 609–651 are Vacuolar-facing; it reads WLVFSAETSRVAPSILIEFINMFLFPASKTSGLYTGQEYVQRV. A helical membrane pass occupies residues 652-671; it reads LLVVTALSVPVLFLGKPLFL. At 672–739 the chain is on the cytoplasmic side; sequence LWLHNGRSCF…EILMTQVIHS (68 aa). Ser-695 and Ser-700 each carry phosphoserine. A helical transmembrane segment spans residues 740-764; the sequence is IEYCLGCISNTASYLRLWALSLAHA. Residues 765–785 are Vacuolar-facing; it reads QLSDVLWAMLMRVGLRVDTTY. Residues 786–824 form a helical membrane-spanning segment; the sequence is GVLLLLPVIALFAVLTIFILLIMEGLSAFLHAIRLHWVE. Over 825 to 856 the chain is Cytoplasmic; sequence FQNKFYVGAGTKFVPFSFSLLSSKFNNDDSVA.

Belongs to the V-ATPase 116 kDa subunit family. In terms of assembly, V-ATPase is a heteromultimeric enzyme made up of two complexes: the ATP-hydrolytic V1 complex and the proton translocation V0 complex. The V1 complex consists of three catalytic AB heterodimers that form a heterohexamer, three peripheral stalks each consisting of EG heterodimers, one central rotor including subunits D and F, and the regulatory subunits C and H. The proton translocation complex V0 consists of the proton transport subunit a, a ring of proteolipid subunits c9c'', rotary subunit d, subunits e and f, and the accessory subunits ATP6AP1/Ac45 and ATP6AP2/PRR. Directly interacts with PSCD2 through its N-terminal cytosolic tail in an intra-endosomal acidification-dependent manner. Disruption of this interaction results in the inhibition of endocytosis. Interacts with SPAAR.

It is found in the cell membrane. The protein localises to the endosome membrane. Functionally, subunit of the V0 complex of vacuolar(H+)-ATPase (V-ATPase), a multisubunit enzyme composed of a peripheral complex (V1) that hydrolyzes ATP and a membrane integral complex (V0) that translocates protons. V-ATPase is responsible for acidifying and maintaining the pH of intracellular compartments and in some cell types, is targeted to the plasma membrane, where it is responsible for acidifying the extracellular environment. Essential component of the endosomal pH-sensing machinery. May play a role in maintaining the Golgi functions, such as glycosylation maturation, by controlling the Golgi pH. In aerobic conditions, involved in intracellular iron homeostasis, thus triggering the activity of Fe(2+) prolyl hydroxylase (PHD) enzymes, and leading to HIF1A hydroxylation and subsequent proteasomal degradation. The chain is V-type proton ATPase 116 kDa subunit a 2 (ATP6V0A2) from Homo sapiens (Human).